The sequence spans 185 residues: Ribosome-recycling factor (185 aa).

It belongs to the RRF family.

The protein resides in the cytoplasm. Its function is as follows. Responsible for the release of ribosomes from messenger RNA at the termination of protein biosynthesis. May increase the efficiency of translation by recycling ribosomes from one round of translation to another. This is Ribosome-recycling factor from Kineococcus radiotolerans (strain ATCC BAA-149 / DSM 14245 / SRS30216).